The following is a 1110-amino-acid chain: ATP-dependent DNA helicase MPH1 (1110 aa).

Over residues 24 to 34 the composition is skewed to polar residues; the sequence is LNEVSDSQTGR. 3 disordered regions span residues 24-165, 178-212, and 236-305; these read LNEV…TNGK, FEEE…PVTN, and TETA…PTHH. 2 stretches are compositionally biased toward basic and acidic residues: residues 42–57 and 178–188; these read NSHE…REIE and FEEEQSARGDA. The segment covering 189–199 has biased composition (acidic residues); the sequence is EMLDDSIEEPG. 2 stretches are compositionally biased toward polar residues: residues 246 to 273 and 287 to 300; these read ISSQ…QTTL and QPAT…SRNE. One can recognise a Helicase ATP-binding domain in the interval 331 to 499; it reads IAHRALFHNL…EVIDGLSISR (169 aa). 344–351 lines the ATP pocket; the sequence is LPTGLGKT. A DEAH box motif is present at residues 447-450; the sequence is DEAH. The Helicase C-terminal domain maps to 675 to 846; that stretch reads ILNHFLDAGG…RFTFHTDKSS (172 aa). Disordered stretches follow at residues 867-937, 1013-1055, and 1069-1110; these read ENSQ…PDLG, VGDP…RCGT, and NLAW…DVFE. A compositionally biased stretch (basic residues) spans 879-890; the sequence is RSRAPKRPPKKF. Basic and acidic residues-rich tracts occupy residues 891-900, 1041-1055, and 1077-1093; these read HMPDGVEKGF, QSRE…RCGT, and EAPR…DQKP.

The protein belongs to the DEAD box helicase family. DEAH subfamily. FANCM sub-subfamily. Interacts with the MHF histone-fold complex to form the FANCM-MHF complex.

The protein localises to the nucleus. The catalysed reaction is ATP + H2O = ADP + phosphate + H(+). ATP-dependent DNA helicase involved in DNA damage repair by homologous recombination and in genome maintenance. Capable of unwinding D-loops. Plays a role in limiting crossover recombinants during mitotic DNA double-strand break (DSB) repair. Component of a FANCM-MHF complex which promotes gene conversion at blocked replication forks, probably by reversal of the stalled fork. The polypeptide is ATP-dependent DNA helicase MPH1 (Coccidioides immitis (strain RS) (Valley fever fungus)).